Reading from the N-terminus, the 263-residue chain is 3-deoxy-manno-octulosonate cytidylyltransferase (263 aa).

The protein belongs to the KdsB family.

The protein resides in the cytoplasm. It carries out the reaction 3-deoxy-alpha-D-manno-oct-2-ulosonate + CTP = CMP-3-deoxy-beta-D-manno-octulosonate + diphosphate. Its pathway is nucleotide-sugar biosynthesis; CMP-3-deoxy-D-manno-octulosonate biosynthesis; CMP-3-deoxy-D-manno-octulosonate from 3-deoxy-D-manno-octulosonate and CTP: step 1/1. It functions in the pathway bacterial outer membrane biogenesis; lipopolysaccharide biosynthesis. Its function is as follows. Activates KDO (a required 8-carbon sugar) for incorporation into bacterial lipopolysaccharide in Gram-negative bacteria. The polypeptide is 3-deoxy-manno-octulosonate cytidylyltransferase (Burkholderia multivorans (strain ATCC 17616 / 249)).